Here is a 1423-residue protein sequence, read N- to C-terminus: Protein phosphatase Slingshot homolog 2 (1423 aa).

Disordered regions lie at residues 1 to 37 (MALV…PRSI) and 51 to 70 (LPRG…NKHA). The span at 9–18 (SPTPSTTSSP) shows a compositional bias: low complexity. 3 positions are modified to phosphoserine: Ser-17, Ser-25, and Ser-36. The 56-residue stretch at 248–303 (ERTERLIKTKLREIMMQKDLENITSKEIRTELEMQMVCNLREFKEFIDNEMIVILG) folds into the DEK-C domain. A Tyrosine-protein phosphatase domain is found at 307–448 (SPTQIFEHVF…LEEYQGILLA (142 aa)). Residue Cys-392 is the Phosphocysteine intermediate of the active site. Residues Ser-461, Ser-487, Ser-534, Ser-631, and Ser-633 each carry the phosphoserine modification. Disordered regions lie at residues 698 to 725 (EMAA…DEDQ), 833 to 858 (HSST…MHSG), 878 to 950 (RQEQ…HCER), 967 to 991 (APQD…QRAV), 1021 to 1042 (SLGH…KQGL), 1074 to 1105 (PQVL…KGDC), and 1207 to 1226 (PEAC…DLSH). A compositionally biased stretch (polar residues) spans 884–904 (HGTASAGPTLSNRKNSKNDSS). 3 stretches are compositionally biased toward basic and acidic residues: residues 910-932 (PKWK…EPSK), 976-987 (SRSKKQEGDLKK), and 1033-1042 (PSKEGEKQGL). Ser-1217 bears the Phosphoserine mark. Residue Thr-1422 is modified to Phosphothreonine.

The protein belongs to the protein-tyrosine phosphatase family. In terms of assembly, interacts with filamentous actin. In terms of tissue distribution, expressed in brain, heart, liver, skeletal muscle, testis and thymus. Also expressed at lower levels in kidney, small intestine and spleen. Within testicular seminiferous tubules expressed in germ cells and spermatocytes, where it has a cytoplasmic localization, and round spermatids, where it concentrates in the acrosomal region next to the nucleus.

The protein resides in the cytoplasm. Its subcellular location is the cytoskeleton. It localises to the cell junction. The protein localises to the focal adhesion. It is found in the cytoplasmic vesicle. The protein resides in the secretory vesicle. Its subcellular location is the acrosome. The catalysed reaction is O-phospho-L-tyrosyl-[protein] + H2O = L-tyrosyl-[protein] + phosphate. It carries out the reaction O-phospho-L-seryl-[protein] + H2O = L-seryl-[protein] + phosphate. The enzyme catalyses O-phospho-L-threonyl-[protein] + H2O = L-threonyl-[protein] + phosphate. In terms of biological role, protein phosphatase which regulates actin filament dynamics. Dephosphorylates and activates the actin binding/depolymerizing factor cofilin, which subsequently binds to actin filaments and stimulates their disassembly. Inhibitory phosphorylation of cofilin is mediated by LIMK1, which may also be dephosphorylated and inactivated by this protein. Required for spermatogenesis. Involved in acrosome biogenesis, probably by regulating cofilin-mediated actin cytoskeleton remodeling during proacrosomal vesicle fusion and/or Golgi to perinuclear vesicle trafficking. In Mus musculus (Mouse), this protein is Protein phosphatase Slingshot homolog 2 (Ssh2).